Reading from the N-terminus, the 344-residue chain is Peroxidase 36 (344 aa).

The signal sequence occupies residues 1 to 28; sequence MNTKTVKSMAGIVLSQISLVALFPLCIC. Cystine bridges form between cysteine 50–cysteine 130, cysteine 83–cysteine 88, cysteine 136–cysteine 337, and cysteine 215–cysteine 247. Catalysis depends on histidine 81, which acts as the Proton acceptor. Residues aspartate 82, valine 85, glycine 87, aspartate 89, and serine 91 each coordinate Ca(2+). Substrate is bound at residue proline 178. Residue histidine 208 coordinates heme b. Position 209 (threonine 209) interacts with Ca(2+). An N-linked (GlcNAc...) asparagine glycan is attached at asparagine 224. Residues aspartate 260, threonine 263, and aspartate 268 each coordinate Ca(2+).

The protein belongs to the peroxidase family. Classical plant (class III) peroxidase subfamily. Heme b is required as a cofactor. It depends on Ca(2+) as a cofactor.

It is found in the secreted. The enzyme catalyses 2 a phenolic donor + H2O2 = 2 a phenolic radical donor + 2 H2O. Functionally, removal of H(2)O(2), oxidation of toxic reductants, biosynthesis and degradation of lignin, suberization, auxin catabolism, response to environmental stresses such as wounding, pathogen attack and oxidative stress. These functions might be dependent on each isozyme/isoform in each plant tissue. This is Peroxidase 36 (PER36) from Arabidopsis thaliana (Mouse-ear cress).